A 275-amino-acid polypeptide reads, in one-letter code: Dermonecrotic toxin LhSicTox-alphaIV2 (275 aa).

The active site involves His5. The Mg(2+) site is built by Glu25 and Asp27. His41 (nucleophile) is an active-site residue. 2 disulfide bridges follow: Cys45/Cys51 and Cys47/Cys192. Mg(2+) is bound at residue Asp85.

This sequence belongs to the arthropod phospholipase D family. Class II subfamily. Mg(2+) serves as cofactor. As to expression, expressed by the venom gland.

It is found in the secreted. It catalyses the reaction an N-(acyl)-sphingosylphosphocholine = an N-(acyl)-sphingosyl-1,3-cyclic phosphate + choline. The enzyme catalyses an N-(acyl)-sphingosylphosphoethanolamine = an N-(acyl)-sphingosyl-1,3-cyclic phosphate + ethanolamine. It carries out the reaction a 1-acyl-sn-glycero-3-phosphocholine = a 1-acyl-sn-glycero-2,3-cyclic phosphate + choline. The catalysed reaction is a 1-acyl-sn-glycero-3-phosphoethanolamine = a 1-acyl-sn-glycero-2,3-cyclic phosphate + ethanolamine. Its function is as follows. Dermonecrotic toxins cleave the phosphodiester linkage between the phosphate and headgroup of certain phospholipids (sphingolipid and lysolipid substrates), forming an alcohol (often choline) and a cyclic phosphate. This toxin acts on sphingomyelin (SM). It may also act on ceramide phosphoethanolamine (CPE), lysophosphatidylcholine (LPC) and lysophosphatidylethanolamine (LPE), but not on lysophosphatidylserine (LPS), and lysophosphatidylglycerol (LPG). It acts by transphosphatidylation, releasing exclusively cyclic phosphate products as second products. Induces dermonecrosis, hemolysis, increased vascular permeability, edema, inflammatory response, and platelet aggregation. This chain is Dermonecrotic toxin LhSicTox-alphaIV2, found in Loxosceles hirsuta (Recluse spider).